The following is a 284-amino-acid chain: Tropomyosin (284 aa).

Disordered stretches follow at residues 1 to 27 and 99 to 131; these read MDAI…QMEQ and YERS…KVLE. Residues 1–273 are a coiled coil; it reads MDAIKKKMQA…KERYKAISDD (273 aa). The span at 102 to 131 shows a compositional bias: basic and acidic residues; it reads SEEKLNSTTEKLEEASKAADESERNRKVLE.

The protein belongs to the tropomyosin family. As to quaternary structure, homodimer.

Tropomyosin, in association with the troponin complex, plays a central role in the calcium dependent regulation of muscle contraction. The polypeptide is Tropomyosin (Mimachlamys nobilis (Noble scallop)).